Reading from the N-terminus, the 320-residue chain is MNHTSDTALLIVNLGTPEAPTAAAVRRYLGEFLSDRRVVSIPPLFWKPLLHMVILPIRGPRSASKYAKVWLQEGSPLSVYTRRIAEGLTQHLPDWRVAWAMRYGAPALTKALDALQAQQVRRIVILPLYPQYSTTTTASVQDVVEAWCKRTPQVQVECIQDYAEDSAWVAAVAASIRRHWQAHGRSEKLMFSFHGLPQRVANNGDPYPQRCQVSASLIAAALDLNESEWVLGYQSRFGAERWLQPYAEPTLWALAESGIRRFDLVCPGFSVDCLETLEEVALGFSETLAARGATMRYIPCLNDDPAHVQALAGLAQRALL.

Fe cation-binding residues include His194 and Glu275.

It belongs to the ferrochelatase family.

The protein localises to the cytoplasm. It carries out the reaction heme b + 2 H(+) = protoporphyrin IX + Fe(2+). The protein operates within porphyrin-containing compound metabolism; protoheme biosynthesis; protoheme from protoporphyrin-IX: step 1/1. In terms of biological role, catalyzes the ferrous insertion into protoporphyrin IX. The protein is Ferrochelatase of Xylella fastidiosa (strain 9a5c).